The sequence spans 246 residues: Osmotin-like protein OSML13 (246 aa).

Positions 1–21 (MAYLRSSFVFFLLAFVTYTYA) are cleaved as a signal peptide. Disulfide bonds link C30–C225, C72–C82, C87–C93, C141–C213, C146–C196, C154–C164, C168–C177, and C178–C183.

The protein belongs to the thaumatin family.

The chain is Osmotin-like protein OSML13 from Solanum commersonii (Commerson's wild potato).